Consider the following 406-residue polypeptide: HEAT repeat-containing taxis protein OE_2401F (406 aa).

7 HEAT repeats span residues 7 to 41 (LERS…NLDE), 42 to 78 (PEPE…VDAL), 90 to 127 (GATW…EDTA), 153 to 184 (IEQP…LGRL), 185 to 215 (TTEQ…LGRF), 216 to 252 (ETAE…NVPP), and 370 to 406 (VGGD…GGKT).

As to quaternary structure, interacts with chemotaxis (Che) proteins.

Involved in taxis signal transduction. Essential for the ability to control the direction of flagellar rotation. May have a role between CheY and the flagellum. The polypeptide is HEAT repeat-containing taxis protein OE_2401F (Halobacterium salinarum (strain ATCC 29341 / DSM 671 / R1)).